A 517-amino-acid chain; its full sequence is Crotonobetaine/carnitine--CoA ligase (517 aa).

It belongs to the ATP-dependent AMP-binding enzyme family.

It carries out the reaction 4-(trimethylamino)butanoate + ATP + CoA = 4-(trimethylamino)butanoyl-CoA + AMP + diphosphate. It catalyses the reaction crotonobetaine + ATP + CoA = crotonobetainyl-CoA + AMP + diphosphate. The enzyme catalyses (R)-carnitine + ATP + CoA = (R)-carnitinyl-CoA + AMP + diphosphate. The protein operates within amine and polyamine metabolism; carnitine metabolism. In terms of biological role, catalyzes the transfer of CoA to carnitine, generating the initial carnitinyl-CoA needed for the CaiB reaction cycle. Also has activity toward crotonobetaine and gamma-butyrobetaine. This Shigella dysenteriae serotype 1 (strain Sd197) protein is Crotonobetaine/carnitine--CoA ligase.